Reading from the N-terminus, the 79-residue chain is Conotoxin Leo-O1 (79 aa).

The N-terminal stretch at 1–22 is a signal peptide; the sequence is MKLTCMMLVAVLFLTAWTFVTA. The propeptide occupies 23–51; that stretch reads NVSRNGLENLFPEERHEMMNPEAAKLNNR. 3 disulfide bridges follow: cysteine 53–cysteine 70, cysteine 60–cysteine 74, and cysteine 69–cysteine 78.

Belongs to the conotoxin O1 superfamily. As to expression, expressed by the venom duct.

The protein localises to the secreted. The chain is Conotoxin Leo-O1 from Conus leopardus (Leopard cone).